A 225-amino-acid polypeptide reads, in one-letter code: Protein ERP3 (225 aa).

Residues methionine 1–proline 23 form the signal peptide. The Lumenal segment spans residues leucine 24 to serine 195. Residues lysine 33–tyrosine 172 form the GOLD domain. Positions glutamate 129–arginine 138 are enriched in basic residues. The segment at glutamate 129–glutamine 149 is disordered. The chain crosses the membrane as a helical span at residues isoleucine 196 to isoleucine 216. Over phenylalanine 217–valine 225 the chain is Cytoplasmic.

The protein belongs to the EMP24/GP25L family.

Its subcellular location is the endoplasmic reticulum membrane. Involved in vesicular protein trafficking. This is Protein ERP3 (ERP3) from Saccharomyces cerevisiae (strain ATCC 204508 / S288c) (Baker's yeast).